We begin with the raw amino-acid sequence, 155 residues long: Large ribosomal subunit protein bL17 (155 aa).

Belongs to the bacterial ribosomal protein bL17 family. As to quaternary structure, part of the 50S ribosomal subunit. Contacts protein L32.

In Bifidobacterium adolescentis (strain ATCC 15703 / DSM 20083 / NCTC 11814 / E194a), this protein is Large ribosomal subunit protein bL17.